A 241-amino-acid polypeptide reads, in one-letter code: Biosynthetic peptidoglycan transglycosylase (241 aa).

Residues 18-38 (GVIGIIALWMAGILIFAFLPV) traverse the membrane as a helical segment.

It belongs to the glycosyltransferase 51 family.

Its subcellular location is the cell inner membrane. The catalysed reaction is [GlcNAc-(1-&gt;4)-Mur2Ac(oyl-L-Ala-gamma-D-Glu-L-Lys-D-Ala-D-Ala)](n)-di-trans,octa-cis-undecaprenyl diphosphate + beta-D-GlcNAc-(1-&gt;4)-Mur2Ac(oyl-L-Ala-gamma-D-Glu-L-Lys-D-Ala-D-Ala)-di-trans,octa-cis-undecaprenyl diphosphate = [GlcNAc-(1-&gt;4)-Mur2Ac(oyl-L-Ala-gamma-D-Glu-L-Lys-D-Ala-D-Ala)](n+1)-di-trans,octa-cis-undecaprenyl diphosphate + di-trans,octa-cis-undecaprenyl diphosphate + H(+). It functions in the pathway cell wall biogenesis; peptidoglycan biosynthesis. Its function is as follows. Peptidoglycan polymerase that catalyzes glycan chain elongation from lipid-linked precursors. This chain is Biosynthetic peptidoglycan transglycosylase, found in Yersinia pseudotuberculosis serotype O:3 (strain YPIII).